The sequence spans 599 residues: Aspartate--tRNA(Asp/Asn) ligase (599 aa).

L-aspartate is bound at residue Glu169. The segment at 193 to 196 (QLFK) is aspartate. Residue Arg215 coordinates L-aspartate. Residues 215 to 217 (RDE) and Gln224 each bind ATP. His447 lines the L-aspartate pocket. Glu481 is a binding site for ATP. Arg488 is an L-aspartate binding site. Residue 533 to 536 (GWDR) coordinates ATP.

Belongs to the class-II aminoacyl-tRNA synthetase family. Type 1 subfamily. As to quaternary structure, homodimer.

It is found in the cytoplasm. It carries out the reaction tRNA(Asx) + L-aspartate + ATP = L-aspartyl-tRNA(Asx) + AMP + diphosphate. Aspartyl-tRNA synthetase with relaxed tRNA specificity since it is able to aspartylate not only its cognate tRNA(Asp) but also tRNA(Asn). Reaction proceeds in two steps: L-aspartate is first activated by ATP to form Asp-AMP and then transferred to the acceptor end of tRNA(Asp/Asn). This Pseudarthrobacter chlorophenolicus (strain ATCC 700700 / DSM 12829 / CIP 107037 / JCM 12360 / KCTC 9906 / NCIMB 13794 / A6) (Arthrobacter chlorophenolicus) protein is Aspartate--tRNA(Asp/Asn) ligase.